A 302-amino-acid polypeptide reads, in one-letter code: Pyridoxal kinase (302 aa).

Substrate contacts are provided by S10, T45, and Y122. ATP contacts are provided by residues 181 to 182 (TS) and 215 to 227 (VGPK…TGTG). D228 contributes to the substrate binding site.

The protein belongs to the pyridoxine kinase family. Homodimer. Requires a divalent metal cation as cofactor.

Its subcellular location is the cytoplasm. It catalyses the reaction pyridoxal + ATP = pyridoxal 5'-phosphate + ADP + H(+). It participates in cofactor metabolism; pyridoxal 5'-phosphate salvage; pyridoxal 5'-phosphate from pyridoxal: step 1/1. Required for synthesis of pyridoxal-5-phosphate from vitamin B6. This Dictyostelium discoideum (Social amoeba) protein is Pyridoxal kinase (pykA).